The primary structure comprises 285 residues: Polyamine aminopropyltransferase (285 aa).

The region spanning Asp-2–Lys-237 is the PABS domain. Gln-31 contacts S-methyl-5'-thioadenosine. Asp-86 contacts spermidine. S-methyl-5'-thioadenosine is bound by residues Glu-106 and Asp-137–Gly-138. The active-site Proton acceptor is the Asp-155.

The protein belongs to the spermidine/spermine synthase family. Homodimer or homotetramer.

The protein localises to the cytoplasm. The catalysed reaction is S-adenosyl 3-(methylsulfanyl)propylamine + putrescine = S-methyl-5'-thioadenosine + spermidine + H(+). It functions in the pathway amine and polyamine biosynthesis; spermidine biosynthesis; spermidine from putrescine: step 1/1. Catalyzes the irreversible transfer of a propylamine group from the amino donor S-adenosylmethioninamine (decarboxy-AdoMet) to putrescine (1,4-diaminobutane) to yield spermidine. This is Polyamine aminopropyltransferase from Streptococcus uberis (strain ATCC BAA-854 / 0140J).